Reading from the N-terminus, the 59-residue chain is MENIIVTQVKSSIGVKKEHRLTLHALGLRKTGQQRKHKVSPELQGMLDSVRHLIKVEKA.

This sequence belongs to the universal ribosomal protein uL30 family. As to quaternary structure, part of the 50S ribosomal subunit.

The sequence is that of Large ribosomal subunit protein uL30 from Leptospira borgpetersenii serovar Hardjo-bovis (strain JB197).